The sequence spans 151 residues: Caveolin-3 (151 aa).

Topologically, residues 1–83 are cytoplasmic; sequence MMAEEHTDLE…RLLSTLLGVP (83 aa). A Glycyl lysine isopeptide (Lys-Gly) (interchain with G-Cter in SUMO3) cross-link involves residue Lys-38. The required for interaction with DAG1 stretch occupies residues 64–114; that stretch reads TFTVSKYWCYRLLSTLLGVPLALLWGFLFACISFCHIWAVVPCIKSYLIEI. Residues 84 to 104 constitute an intramembrane region (helical); it reads LALLWGFLFACISFCHIWAVV. Residues 105-151 are Cytoplasmic-facing; it reads PCIKSYLIEIQCISHIYSLCIRTFCNPLFAALGQVCSSIKVVLRKEV.

This sequence belongs to the caveolin family. As to quaternary structure, homooligomer. Interacts with DLG1 and KCNA5; forms a ternary complex. Interacts with TRIM72. Interacts with MUSK; may regulate MUSK signaling. Interacts with DAG1 (via its C-terminal); the interaction prevents binding of DAG1 with DMD. Interacts with DYSF. Interacts with POPDC1. Interacts with CAVIN1 and CAVIN2. Interacts with CAVIN4. Sumoylation with SUMO3 by PIAS4 may reduce agonist-induced internalization and desensitization of adrenergic receptor ABRD2. Expressed predominantly in muscle.

It localises to the golgi apparatus membrane. Its subcellular location is the cell membrane. The protein localises to the membrane. The protein resides in the caveola. It is found in the sarcolemma. Its function is as follows. May act as a scaffolding protein within caveolar membranes. Interacts directly with G-protein alpha subunits and can functionally regulate their activity. May also regulate voltage-gated potassium channels. Plays a role in the sarcolemma repair mechanism of both skeletal muscle and cardiomyocytes that permits rapid resealing of membranes disrupted by mechanical stress. Mediates the recruitment of CAVIN2 and CAVIN3 proteins to the caveolae. The protein is Caveolin-3 (CAV3) of Homo sapiens (Human).